A 586-amino-acid chain; its full sequence is FAD-linked oxidoreductase orf1 (586 aa).

Positions Met-1 to Ala-17 are cleaved as a signal peptide. N-linked (GlcNAc...) asparagine glycosylation is found at Asn-29, Asn-51, Asn-79, Asn-110, Asn-146, Asn-188, Asn-314, Asn-321, Asn-358, Asn-402, Asn-434, and Asn-461. Positions Thr-124–Asp-303 constitute an FAD-binding PCMH-type domain.

The protein belongs to the oxygen-dependent FAD-linked oxidoreductase family.

It catalyses the reaction betaenone C = betaenone A. It participates in mycotoxin biosynthesis. Its function is as follows. FAD-linked oxidoreductase; part of the gene cluster that mediates the biosynthesis of betaenones, phytotoxic polyketides involved in leaf spot disease in sugar beets. The first step of the pathway is the synthesis of dehydroprobetaenone I by the polyketide synthase bet1 and the enoyl reductase bet3 via condensation of one acetyl-CoA starter unit with 7 malonyl-CoA units and 5 methylations. The C-terminal reductase (R) domain of bet1 catalyzes the reductive release of the polyketide chain. Because bet1 lacks a designated enoylreductase (ER) domain, the required activity is provided the enoyl reductase bet3. The short-chain dehydrogenase/reductase bet4 then catalyzes reduction of dehydroprobetaenone I to probetaenone I. The cytochrome P450 monooxygenase bet2 catalyzes successive epoxidation, oxidation (resulting from epoxide opening) and hydroxylation to install a tertiary alcohol in the decaline ring to yield betaenone C from dehydroprobetaenone I and betaenone B from probetaenone I. The FAD-linked oxidoreductase (orf1) is probably responsible for the conversion of betaenone C to betaenone A via an intramolecular aldol reaction between C-1 and C-17 to form the bridged tricyclic system in betaenone A. This is FAD-linked oxidoreductase orf1 from Neocamarosporium betae (Beet black rot fungus).